The following is a 325-amino-acid chain: Beta-ketoacyl-[acyl-carrier-protein] synthase III (325 aa).

Catalysis depends on residues C116 and H252. The ACP-binding stretch occupies residues 253–257; sequence QANLR. N282 is an active-site residue.

The protein belongs to the thiolase-like superfamily. FabH family. Homodimer.

It localises to the cytoplasm. The catalysed reaction is malonyl-[ACP] + acetyl-CoA + H(+) = 3-oxobutanoyl-[ACP] + CO2 + CoA. It participates in lipid metabolism; fatty acid biosynthesis. In terms of biological role, catalyzes the condensation reaction of fatty acid synthesis by the addition to an acyl acceptor of two carbons from malonyl-ACP. Catalyzes the first condensation reaction which initiates fatty acid synthesis and may therefore play a role in governing the total rate of fatty acid production. Possesses both acetoacetyl-ACP synthase and acetyl transacylase activities. Its substrate specificity determines the biosynthesis of branched-chain and/or straight-chain of fatty acids. The protein is Beta-ketoacyl-[acyl-carrier-protein] synthase III of Xanthomonas oryzae pv. oryzae (strain MAFF 311018).